Here is a 361-residue protein sequence, read N- to C-terminus: MSSRSASFLLRPAAALYGVVMSLRNHLYDRGAFKSWRSPIPVVSVGNITTGGTGKTPLVDWIVKFYEASGIPTAIVSRGYGRQTKGVQLVSDGKRILLGSRDAGDETAMLASRNPGTIVVVAEERVEGVQFLMREFADRLPGVIVLDDAFQHRKIARDLDIVVVNAGTPQELDAMLPAGRLREPLPGLSRADLIILSKITDDAKAAPLLQKLRETGKPVLRSKIKPGKLVKVDGSENGATEPAVKALAFAGIGAPEGFLHSLEKAGITVKATKFFRDHEPYTEAAIRSIIEESKRQEFVPVTTEKDWFRIADNPQLTEMLAQAGCRYLTIAPEFLDGTEELEKRLLSVLETKVVNWPLSPP.

49–56 (TTGGTGKT) serves as a coordination point for ATP.

Belongs to the LpxK family.

The enzyme catalyses a lipid A disaccharide + ATP = a lipid IVA + ADP + H(+). It participates in glycolipid biosynthesis; lipid IV(A) biosynthesis; lipid IV(A) from (3R)-3-hydroxytetradecanoyl-[acyl-carrier-protein] and UDP-N-acetyl-alpha-D-glucosamine: step 6/6. Its function is as follows. Transfers the gamma-phosphate of ATP to the 4'-position of a tetraacyldisaccharide 1-phosphate intermediate (termed DS-1-P) to form tetraacyldisaccharide 1,4'-bis-phosphate (lipid IVA). This is Tetraacyldisaccharide 4'-kinase from Chlorobaculum parvum (strain DSM 263 / NCIMB 8327) (Chlorobium vibrioforme subsp. thiosulfatophilum).